The chain runs to 449 residues: uncharacterized protein (449 aa).

Helical transmembrane passes span 1-21 (MVAN…ILLI), 26-46 (IHLT…HVIT), 51-71 (IDYI…MVLV), 97-117 (LLML…PNAT), 137-157 (FVPI…LTLV), 178-198 (FKLS…TPFL), 223-243 (VLMA…IGES), 244-264 (LPVP…ALLL), 285-305 (LIFF…GVTA), 310-330 (LLAV…VFTV), 340-360 (IPLV…IGFA), 377-397 (VLPL…GTLV), and 425-445 (GLPV…WLMF).

This sequence belongs to the CitM (TC 2.A.11) transporter family.

It is found in the cell membrane. This is an uncharacterized protein from Synechocystis sp. (strain ATCC 27184 / PCC 6803 / Kazusa).